Here is a 293-residue protein sequence, read N- to C-terminus: Fructokinase (293 aa).

Thr-133 lines the ATP pocket. Residues His-156, Cys-174, His-177, and Cys-180 each coordinate Zn(2+). Residues Pro-188 and 236 to 240 each bind ATP; that span reads GVMAQ.

The protein belongs to the ROK (NagC/XylR) family. The cofactor is Mg(2+).

The enzyme catalyses D-fructose + ATP = D-fructose 6-phosphate + ADP + H(+). With respect to regulation, inhibition by zinc ions. The protein is Fructokinase (scrK) of Streptococcus mutans serotype c (strain ATCC 700610 / UA159).